Reading from the N-terminus, the 355-residue chain is Histidinol-phosphate aminotransferase (355 aa).

Position 222 is an N6-(pyridoxal phosphate)lysine (Lys222).

This sequence belongs to the class-II pyridoxal-phosphate-dependent aminotransferase family. Histidinol-phosphate aminotransferase subfamily. The cofactor is pyridoxal 5'-phosphate.

It carries out the reaction L-histidinol phosphate + 2-oxoglutarate = 3-(imidazol-4-yl)-2-oxopropyl phosphate + L-glutamate. It participates in amino-acid biosynthesis; L-histidine biosynthesis; L-histidine from 5-phospho-alpha-D-ribose 1-diphosphate: step 7/9. This Natronomonas pharaonis (strain ATCC 35678 / DSM 2160 / CIP 103997 / JCM 8858 / NBRC 14720 / NCIMB 2260 / Gabara) (Halobacterium pharaonis) protein is Histidinol-phosphate aminotransferase.